The sequence spans 287 residues: Zinc finger protein SNAI3 (287 aa).

The SNAG domain stretch occupies residues 1 to 20; the sequence is MPRSFLVKTHSSHRVPNYGK. 4 consecutive C2H2-type zinc fingers follow at residues 147-169, 178-200, 204-226, and 232-254; these read FECIHCHRPYHTLAGLARHQQLH, FTCRYCDKEYASLGALKMHIRTH, CICKVCGKAFSRPWLLQGHIRTH, and YTCSHCSRAFADRSNLRAHLQTH. A C2H2-type 5; degenerate zinc finger spans residues 260–282; it reads YRCAVCPKAFSRMSLLARHEEAG.

Belongs to the snail C2H2-type zinc-finger protein family. In terms of tissue distribution, highly expressed in skeletal muscle and thymus. Lower expression in heart, lung and spleen.

Its subcellular location is the nucleus. Functionally, seems to inhibit myoblast differentiation. Transcriptional repressor of E-box-dependent transactivation of downstream myogenic bHLHs genes. Binds preferentially to the canonical E-box sequences 5'-CAGGTG-3' and 5'-CACCTG-3'. The protein is Zinc finger protein SNAI3 (Snai3) of Mus musculus (Mouse).